A 141-amino-acid polypeptide reads, in one-letter code: Glutathione transferase FosA (141 aa).

A VOC domain is found at 4 to 117; it reads SLNHLTLAVS…DGHKLELHVG (114 aa). Mn(2+)-binding residues include histidine 7, histidine 67, and glutamate 113.

It belongs to the fosfomycin resistance protein family. Homodimer. It depends on Mn(2+) as a cofactor.

Its subcellular location is the cytoplasm. It catalyses the reaction RX + glutathione = an S-substituted glutathione + a halide anion + H(+). Its activity is regulated as follows. Requires the monovalent cation K(+) for optimal activity. In terms of biological role, metalloglutathione transferase which confers resistance to fosfomycin by catalyzing the addition of glutathione to fosfomycin. This chain is Glutathione transferase FosA (fosA), found in Serratia marcescens.